Reading from the N-terminus, the 1425-residue chain is Protein NAP1 (1425 aa).

Polar residues-rich tracts occupy residues 1–20 (MANS…PTSV), 1299–1312 (TPLS…SPSV), and 1320–1329 (SMKNSTTPQR). 2 disordered regions span residues 1–24 (MANS…RSRE) and 1299–1425 (TPLS…KQHN). Over residues 1362-1405 (SETGNSRNNENNNNNKQRGSSRRSGPLDYSSSHKGGSGSNSTGP) the composition is skewed to low complexity.

Belongs to the HEM-1/HEM-2 family. Binds PIR. In terms of tissue distribution, expressed in roots, root hairs, hypocotyls, cotyledons, stems, leaves, trichomes, and flowers.

Functionally, involved in regulation of actin and microtubule organization. Part of a WAVE complex that activates the Arp2/3 complex. This Arabidopsis thaliana (Mouse-ear cress) protein is Protein NAP1 (NAP1).